The sequence spans 333 residues: Ferrochelatase (333 aa).

His202 and Glu284 together coordinate Fe cation.

Belongs to the ferrochelatase family.

It localises to the cytoplasm. It catalyses the reaction heme b + 2 H(+) = protoporphyrin IX + Fe(2+). Its pathway is porphyrin-containing compound metabolism; protoheme biosynthesis; protoheme from protoporphyrin-IX: step 1/1. Functionally, catalyzes the ferrous insertion into protoporphyrin IX. In Francisella tularensis subsp. holarctica (strain LVS), this protein is Ferrochelatase.